Here is a 932-residue protein sequence, read N- to C-terminus: Beta-mannosidase A (932 aa).

The N-terminal stretch at 1–19 (MRVPAQATIAVLASAVSSP) is a signal peptide. Residues N41, N81, N94, N249, N261, N284, N289, N318, and N348 are each glycosylated (N-linked (GlcNAc...) asparagine). E480 serves as the catalytic Proton donor. Residues N538, N551, N609, N624, N632, N659, N739, and N791 are each glycosylated (N-linked (GlcNAc...) asparagine).

Belongs to the glycosyl hydrolase 2 family. Beta-mannosidase A subfamily. As to quaternary structure, homodimer.

Its subcellular location is the secreted. It catalyses the reaction Hydrolysis of terminal, non-reducing beta-D-mannose residues in beta-D-mannosides.. It functions in the pathway glycan metabolism; N-glycan degradation. In terms of biological role, exoglycosidase that cleaves the single beta-linked mannose residue from the non-reducing end of beta-mannosidic oligosaccharides of various complexity and length. Involved in the degradation of polymeric mannan and galactomannan. This Aspergillus terreus (strain NIH 2624 / FGSC A1156) protein is Beta-mannosidase A (mndA).